Reading from the N-terminus, the 325-residue chain is Aldo-keto reductase family 1 member A1 (325 aa).

Thr-2 bears the N-acetylthreonine mark. Ser-4 bears the Phosphoserine mark. NADP(+) is bound by residues 11–20 (GQKMPLIGLG), Thr-21, and Trp-22. Ser-38 carries the post-translational modification Phosphoserine. Asp-45 provides a ligand contact to NADP(+). Residue Tyr-50 is the Proton donor of the active site. Lys-127 is subject to N6-acetyllysine; alternate. Residue Lys-127 is modified to N6-succinyllysine; alternate. Lys-145 carries the N6-succinyllysine modification. Residues Ser-162, Asn-163, Ser-211, Leu-213, Ser-215, Ser-216, Lys-263, Ser-264, Ile-265, Arg-269, Gln-272, and Asn-273 each coordinate NADP(+). Residue Ser-211 is modified to Phosphoserine.

This sequence belongs to the aldo/keto reductase family. Monomer. Widely expressed.

It is found in the cytoplasm. The protein localises to the cytosol. It localises to the apical cell membrane. It catalyses the reaction a primary alcohol + NADP(+) = an aldehyde + NADPH + H(+). The catalysed reaction is L-gulonate + NADP(+) = aldehydo-D-glucuronate + NADPH + H(+). It carries out the reaction L-gulono-1,4-lactone + NADP(+) = D-glucurono-3,6-lactone + NADPH + H(+). The enzyme catalyses allyl alcohol + NADP(+) = acrolein + NADPH + H(+). It catalyses the reaction glycerol + NADP(+) = D-glyceraldehyde + NADPH + H(+). The catalysed reaction is glycerol + NADP(+) = L-glyceraldehyde + NADPH + H(+). It carries out the reaction hydroxyacetone + NADP(+) = methylglyoxal + NADPH + H(+). The enzyme catalyses 3-deoxyfructose + NADP(+) = 3-deoxyglucosone + NADPH + H(+). It catalyses the reaction (R)-mevalonate + NADP(+) = (R)-mevaldate + NADPH + H(+). The catalysed reaction is pyridine 3-methanol + NADP(+) = pyridine-3-carbaldehyde + NADPH + H(+). It carries out the reaction S-nitroso-CoA + NADPH + H(+) = sulfinamide-CoA + NADP(+). The enzyme catalyses S-nitrosoglutathione + NADPH + H(+) = S-(hydroxysulfenamide)glutathione + NADP(+). Functionally, catalyzes the NADPH-dependent reduction of a wide variety of carbonyl-containing compounds to their corresponding alcohols. Displays enzymatic activity towards endogenous metabolites such as aromatic and aliphatic aldehydes, ketones, monosaccharides and bile acids, with a preference for negatively charged substrates, such as glucuronate and succinic semialdehyde. Plays an important role in ascorbic acid biosynthesis by catalyzing the reduction of D-glucuronic acid and D-glucurono-gamma-lactone. Functions as a detoxifiying enzyme by reducing a range of toxic aldehydes. Reduces methylglyoxal and 3-deoxyglucosone, which are present at elevated levels under hyperglycemic conditions and are cytotoxic. Involved in the detoxification of lipid-derived aldehydes like acrolein. Plays a role in the activation of procarcinogens, such as polycyclic aromatic hydrocarbon trans-dihydrodiols, and in the metabolism of various xenobiotics and drugs. Also acts as an inhibitor of protein S-nitrosylation by mediating degradation of S-nitroso-coenzyme A (S-nitroso-CoA), a cofactor required to S-nitrosylate proteins. S-nitroso-CoA reductase activity is involved in reprogramming intermediary metabolism in renal proximal tubules, notably by inhibiting protein S-nitrosylation of isoform 2 of PKM (PKM2). Also acts as a S-nitroso-glutathione reductase by catalyzing the NADPH-dependent reduction of S-nitrosoglutathione. Displays no reductase activity towards retinoids. The sequence is that of Aldo-keto reductase family 1 member A1 from Mus musculus (Mouse).